The following is a 205-amino-acid chain: ATP phosphoribosyltransferase (205 aa).

The protein belongs to the ATP phosphoribosyltransferase family. Short subfamily. As to quaternary structure, heteromultimer composed of HisG and HisZ subunits.

The protein resides in the cytoplasm. It carries out the reaction 1-(5-phospho-beta-D-ribosyl)-ATP + diphosphate = 5-phospho-alpha-D-ribose 1-diphosphate + ATP. The protein operates within amino-acid biosynthesis; L-histidine biosynthesis; L-histidine from 5-phospho-alpha-D-ribose 1-diphosphate: step 1/9. In terms of biological role, catalyzes the condensation of ATP and 5-phosphoribose 1-diphosphate to form N'-(5'-phosphoribosyl)-ATP (PR-ATP). Has a crucial role in the pathway because the rate of histidine biosynthesis seems to be controlled primarily by regulation of HisG enzymatic activity. The sequence is that of ATP phosphoribosyltransferase from Vesicomyosocius okutanii subsp. Calyptogena okutanii (strain HA).